Reading from the N-terminus, the 317-residue chain is Putative 2-hydroxyacid dehydrogenase SA2098 (317 aa).

NAD(+) contacts are provided by residues 155-156, 234-236, and Asp-260; these read EI and ASR. Residue Arg-236 is part of the active site. Glu-265 is a catalytic residue. His-283 functions as the Proton donor in the catalytic mechanism. 283–286 provides a ligand contact to NAD(+); the sequence is HIGN.

This sequence belongs to the D-isomer specific 2-hydroxyacid dehydrogenase family.

This chain is Putative 2-hydroxyacid dehydrogenase SA2098, found in Staphylococcus aureus (strain N315).